The sequence spans 130 residues: C-C motif chemokine 28 (130 aa).

The N-terminal stretch at 1–16 (MQQAGLTLMAVAVCVA) is a signal peptide. 2 cysteine pairs are disulfide-bonded: C30–C58 and C31–C73. N78 is a glycosylation site (N-linked (GlcNAc...) asparagine). Positions 92-130 (KNGRENVCSGKKQPSRKDRKGHTTRKHRTRGTHRHEASR) are disordered. The span at 104–124 (QPSRKDRKGHTTRKHRTRGTH) shows a compositional bias: basic residues.

The protein belongs to the intercrine beta (chemokine CC) family. Mainly expressed in testis, epithelial cells of normal colon, kidney, Peyer patches, lymph nodes. Also found in lower levels in brain, spleen and lung.

It localises to the secreted. Chemotactic for resting CD4, CD8 T-cells and eosinophils. Binds to CCR10 and induces calcium mobilization in a dose-dependent manner. This is C-C motif chemokine 28 (Ccl28) from Mus musculus (Mouse).